A 139-amino-acid chain; its full sequence is Transcription antitermination protein NusB (139 aa).

Belongs to the NusB family.

Functionally, involved in transcription antitermination. Required for transcription of ribosomal RNA (rRNA) genes. Binds specifically to the boxA antiterminator sequence of the ribosomal RNA (rrn) operons. The chain is Transcription antitermination protein NusB from Lactiplantibacillus plantarum (strain ATCC BAA-793 / NCIMB 8826 / WCFS1) (Lactobacillus plantarum).